A 419-amino-acid chain; its full sequence is 20-hydroxy-prefusarin hydrolase FUS2 (419 aa).

S238 is an active-site residue.

The protein belongs to the AB hydrolase superfamily. FUS2 hydrolase family.

It functions in the pathway mycotoxin biosynthesis. Functionally, 20-hydroxy-prefusarin hydrolase; part of the gene cluster that mediates the biosynthesis of the mycotoxin fusarin C. Within the cluster, FUS1, FUS2, FUS8 and FUS9 are sufficient for fusarin production. The roles of the other FUS members are yet undetermined. The fusarin C synthetase FUS1 is responsible for the condensation of one acetyl-coenzyme A (CoA) unit with six malonyl-CoA units and the amide linkage of the arising heptaketide and homoserine, subsequently releasing the first intermediate, prefusarin, as an alcohol with an open ring structure. The cytochrome P450 monooxygenase FUS8 participates in multiple oxidation processes at carbon C-20 and is able to use the FUS1 product as substrate, resulting in formation of 20-hydroxy-prefusarin. This reaction seems to be essential before the 2-pyrrolidone ring closure can be catalyzed by FUS2, generating 20-hydroxy-fusarin. FUS8 is able to further oxidizes carbon C-20 after ring closure, resulting in the formation of carboxy-fusarin C. As the last step, FUS9 methylates the hydroxyl group at C-21 to generate fusarin C. Fusarin C can then rearrange to epi-fusarin C, the (z)-isomers, and fusarin A and fusarin D. This is 20-hydroxy-prefusarin hydrolase FUS2 from Gibberella moniliformis (strain M3125 / FGSC 7600) (Maize ear and stalk rot fungus).